The following is a 683-amino-acid chain: U4/U6 small nuclear ribonucleoprotein Prp3 (683 aa).

The PWI domain occupies 1–87 (MALSKRELDE…HSKSSSDRSR (87 aa)). Residues 73-107 (GRSSRHSKSSSDRSRKRELKEVFGDDSEISKESSG) are compositionally biased toward basic and acidic residues. The segment at 73 to 135 (GRSSRHSKSS…IPGPPSESPG (63 aa)) is disordered. Residue K139 forms a Glycyl lysine isopeptide (Lys-Gly) (interchain with G-Cter in SUMO2) linkage. The tract at residues 153 to 183 (IEERKKQLSFISPPTPQPKTPSSSQPERLPI) is disordered. The residue at position 164 (S164) is a Phosphoserine. At T167 the chain carries Phosphothreonine. Residues K244 and K252 each participate in a glycyl lysine isopeptide (Lys-Gly) (interchain with G-Cter in SUMO2) cross-link. The segment at 416–550 (NLVEHPAQLN…VHISVYRVRN (135 aa)) is mediates interaction with SART3. S619 bears the Phosphoserine mark.

Component of the precatalytic spliceosome (spliceosome B complex). Component of the U4/U6-U5 tri-snRNP complex, a building block of the precatalytic spliceosome (spliceosome B complex). The U4/U6-U5 tri-snRNP complex is composed of the U4, U6 and U5 snRNAs and at least PRPF3, PRPF4, PRPF6, PRPF8, PRPF31, SNRNP200, TXNL4A, SNRNP40, SNRPB, SNRPD1, SNRPD2, SNRPD3, SNRPE, SNRPF, SNRPG, DDX23, CD2BP2, PPIH, SNU13, EFTUD2, SART1 and USP39, plus LSM2, LSM3, LSM4, LSM5, LSM6, LSM7 and LSM8. Interacts directly with PRPF4. Part of a heteromeric complex containing PPIH, PRPF3 and PRPF4 that is stable in the absence of RNA. Interacts with SART3; the interaction is direct and recruits the deubiquitinase USP4 to PRPF3. Interacts with PRPF19. Interacts ('Lys-63'-linked polyubiquitinated) with PRPF8 (via the MPN (JAB/Mov34) domain); may stabilize the U4/U6-U5 tri-snRNP complex. Interacts with ERCC6. Ubiquitinated. Undergoes 'Lys-63'-linked polyubiquitination by PRPF19 and deubiquitination by USP4. 'Lys-63'-linked ubiquitination increases the affinity for PRPF8 and may regulate the assembly of the U4/U6-U5 tri-snRNP complex. In terms of tissue distribution, highly expressed in retina, liver, kidney and blood. Detected at lower levels in heart and brain.

The protein localises to the nucleus. It is found in the nucleus speckle. Its function is as follows. Plays a role in pre-mRNA splicing as component of the U4/U6-U5 tri-snRNP complex that is involved in spliceosome assembly, and as component of the precatalytic spliceosome (spliceosome B complex). The polypeptide is U4/U6 small nuclear ribonucleoprotein Prp3 (PRPF3) (Homo sapiens (Human)).